We begin with the raw amino-acid sequence, 4644 residues long: Cytoplasmic dynein 1 heavy chain 1 (4644 aa).

Serine 2 bears the N-acetylserine mark. The tract at residues 2-1865 is stem; the sequence is SETGGGEDGS…SIQMANAKFN (1864 aa). Coiled coils occupy residues 48-69, 179-200, 453-476, and 541-564; these read AALEAALEEKSALEQMRKFLSD, SVEKKIAELEMGLLHLQQNIEI, AHRKLQARLDQMRKFRRQHEQLRA, and TEAWEAAMKRYDERIDRVETRITA. Serine 68 bears the Phosphoserine mark. The interval 446-701 is interaction with DYNC1I2; the sequence is MVWRINPAHR…NTQEIFDDWA (256 aa). The interaction with DYNC1LI2 stretch occupies residues 649-800; it reads AKQIDRQLTA…EKVEERNTIS (152 aa). Residue lysine 1123 is modified to N6-acetyllysine. Residues 1169-1201 adopt a coiled-coil conformation; that stretch reads TYVQSLKRKIKQFEKQVELYRNGQRLLEKQRFQ. Serine 1228 is modified (phosphoserine). Coiled-coil stretches lie at residues 1229–1250 and 1355–1371; these read AIQQQVANLQMKIVQEDRAVES and RKLRQNLDGLLNQLKNF. AAA regions lie at residues 1866-2097, 2178-2450, 2554-2803, and 2897-3166; these read YGFE…VLVS, EELK…LTRL, EVET…WVRG, and VFYE…GGRT. Residues 1904–1911 and 2222–2229 contribute to the ATP site; these read GPAGTGKT and GPSGSGKS. The interval 2389-2409 is disordered; it reads EDEAQRRRKGKEDEGEEAASP. ATP contacts are provided by residues 2593–2600 and 2935–2942; these read GPPGSGKT and GVSGAGKT. 3 coiled-coil regions span residues 3187 to 3273, 3394 to 3498, and 3735 to 3798; these read EKRS…ADKQ, AIAQ…KNQM, and EFQL…VSQQ. The stalk stretch occupies residues 3187-3498; it reads EKRSELEEQQ…KTSETFKNQM (312 aa). Lysine 3478 is subject to N6-acetyllysine. 2 AAA regions span residues 3551-3780 and 4003-4219; these read LSNA…EVTR and AHMF…TVDT. Phosphoserine is present on serine 4160. N6-acetyllysine is present on lysine 4281. At threonine 4364 the chain carries Phosphothreonine.

The protein belongs to the dynein heavy chain family. As to quaternary structure, homodimer. The cytoplasmic dynein 1 complex consists of two catalytic heavy chains (HCs) and a number of non-catalytic subunits presented by intermediate chains (ICs), light intermediate chains (LICs) and light chains (LCs); the composition seems to vary in respect to the IC, LIC and LC composition. The heavy chain homodimer serves as a scaffold for the probable homodimeric assembly of the respective non-catalytic subunits. The ICs and LICs bind directly to the HC dimer and dynein LCs assemble on the IC dimer. Interacts with DYNC1LI1; DYNC1LI1 and DYNC1LI2 bind mutually exclusive to DYNC1H1. Interacts with DYNC1LI2; DYNC1LI1 and DYNC1LI2 bind mutually exclusive to DYNC1H1. Interacts with DYNC1I2. Interacts with BICD2. Interacts with DNALI1.

The protein resides in the cytoplasm. It is found in the cytoskeleton. Cytoplasmic dynein 1 acts as a motor for the intracellular retrograde motility of vesicles and organelles along microtubules. Dynein has ATPase activity; the force-producing power stroke is thought to occur on release of ADP. Plays a role in mitotic spindle assembly and metaphase plate congression. In Rattus norvegicus (Rat), this protein is Cytoplasmic dynein 1 heavy chain 1 (Dync1h1).